The following is a 142-amino-acid chain: ATP synthase subunit b' (142 aa).

Residues 7-27 (TLPLMMFQFFLLVAVLNAVFF) traverse the membrane as a helical segment.

The protein belongs to the ATPase B chain family. In terms of assembly, F-type ATPases have 2 components, F(1) - the catalytic core - and F(0) - the membrane proton channel. F(1) has five subunits: alpha(3), beta(3), gamma(1), delta(1), epsilon(1). F(0) has four main subunits: a(1), b(1), b'(1) and c(10-14). The alpha and beta chains form an alternating ring which encloses part of the gamma chain. F(1) is attached to F(0) by a central stalk formed by the gamma and epsilon chains, while a peripheral stalk is formed by the delta, b and b' chains.

The protein localises to the cellular thylakoid membrane. F(1)F(0) ATP synthase produces ATP from ADP in the presence of a proton or sodium gradient. F-type ATPases consist of two structural domains, F(1) containing the extramembraneous catalytic core and F(0) containing the membrane proton channel, linked together by a central stalk and a peripheral stalk. During catalysis, ATP synthesis in the catalytic domain of F(1) is coupled via a rotary mechanism of the central stalk subunits to proton translocation. In terms of biological role, component of the F(0) channel, it forms part of the peripheral stalk, linking F(1) to F(0). The b'-subunit is a diverged and duplicated form of b found in plants and photosynthetic bacteria. In Acaryochloris marina (strain MBIC 11017), this protein is ATP synthase subunit b'.